The chain runs to 365 residues: tRNA/tmRNA (uracil-C(5))-methyltransferase (365 aa).

S-adenosyl-L-methionine-binding residues include Q189, Y217, N222, E238, and D298. C323 serves as the catalytic Nucleophile. E357 functions as the Proton acceptor in the catalytic mechanism.

It belongs to the class I-like SAM-binding methyltransferase superfamily. RNA M5U methyltransferase family. TrmA subfamily.

It catalyses the reaction uridine(54) in tRNA + S-adenosyl-L-methionine = 5-methyluridine(54) in tRNA + S-adenosyl-L-homocysteine + H(+). The catalysed reaction is uridine(341) in tmRNA + S-adenosyl-L-methionine = 5-methyluridine(341) in tmRNA + S-adenosyl-L-homocysteine + H(+). Dual-specificity methyltransferase that catalyzes the formation of 5-methyluridine at position 54 (m5U54) in all tRNAs, and that of position 341 (m5U341) in tmRNA (transfer-mRNA). In Shewanella piezotolerans (strain WP3 / JCM 13877), this protein is tRNA/tmRNA (uracil-C(5))-methyltransferase.